The sequence spans 383 residues: Xylose/arabinose import ATP-binding protein XacJ (383 aa).

The region spanning 4-235 is the ABC transporter domain; that stretch reads IQLTDLTKRF…PNNLFVAEFI (232 aa). Position 36–43 (36–43) interacts with ATP; it reads GPSGCGKS.

Belongs to the ABC transporter superfamily. Carbohydrate uptake transporter-1 (CUT1) (TC 3.A.1.1) family. The complex is composed of two ATP-binding proteins (XacJ and XacK), two transmembrane proteins (XacH and XacI) and a solute-binding protein (XacG).

The protein localises to the cell membrane. The catalysed reaction is D-xylose(out) + ATP + H2O = D-xylose(in) + ADP + phosphate + H(+). The enzyme catalyses L-arabinose(out) + ATP + H2O = L-arabinose(in) + ADP + phosphate + H(+). Part of the ABC transporter complex XacGHIJK involved in the uptake of xylose and arabinose. Responsible for energy coupling to the transport system. This is Xylose/arabinose import ATP-binding protein XacJ from Haloferax volcanii (strain ATCC 29605 / DSM 3757 / JCM 8879 / NBRC 14742 / NCIMB 2012 / VKM B-1768 / DS2) (Halobacterium volcanii).